The chain runs to 241 residues: 1-(5-phosphoribosyl)-5-[(5-phosphoribosylamino)methylideneamino] imidazole-4-carboxamide isomerase (241 aa).

The active-site Proton acceptor is the Asp-8. Asp-129 serves as the catalytic Proton donor.

The protein belongs to the HisA/HisF family.

The protein localises to the cytoplasm. The catalysed reaction is 1-(5-phospho-beta-D-ribosyl)-5-[(5-phospho-beta-D-ribosylamino)methylideneamino]imidazole-4-carboxamide = 5-[(5-phospho-1-deoxy-D-ribulos-1-ylimino)methylamino]-1-(5-phospho-beta-D-ribosyl)imidazole-4-carboxamide. It functions in the pathway amino-acid biosynthesis; L-histidine biosynthesis; L-histidine from 5-phospho-alpha-D-ribose 1-diphosphate: step 4/9. The protein is 1-(5-phosphoribosyl)-5-[(5-phosphoribosylamino)methylideneamino] imidazole-4-carboxamide isomerase of Chloroflexus aurantiacus (strain ATCC 29364 / DSM 637 / Y-400-fl).